The sequence spans 343 residues: Small ribosomal subunit biogenesis GTPase RsgA (343 aa).

A CP-type G domain is found at 116 to 275; it reads RGQLKPVAAN…LIDSPGIREF (160 aa). GTP is bound by residues 163-166 and 217-225; these read NKFD and GQSGVGKSS. Zn(2+) is bound by residues Cys299, Cys304, His306, and Cys312.

Belongs to the TRAFAC class YlqF/YawG GTPase family. RsgA subfamily. In terms of assembly, monomer. Associates with 30S ribosomal subunit, binds 16S rRNA. Requires Zn(2+) as cofactor.

The protein localises to the cytoplasm. One of several proteins that assist in the late maturation steps of the functional core of the 30S ribosomal subunit. Helps release RbfA from mature subunits. May play a role in the assembly of ribosomal proteins into the subunit. Circularly permuted GTPase that catalyzes slow GTP hydrolysis, GTPase activity is stimulated by the 30S ribosomal subunit. The polypeptide is Small ribosomal subunit biogenesis GTPase RsgA (Pseudomonas fluorescens (strain Pf0-1)).